The primary structure comprises 1257 residues: Stromal processing peptidase, chloroplastic (1257 aa).

The transit peptide at 1-142 (MAASTSTSSL…ASVKRVQLPH (142 aa)) directs the protein to the chloroplast. A Zn(2+)-binding site is contributed by H236. The active-site Proton acceptor is E239. Residue H240 participates in Zn(2+) binding. Residue E309 is part of the active site. E316 contributes to the Zn(2+) binding site. The interval 1233–1257 (EEAGEGYPGVLPMGRGLSTMTRPTT) is disordered.

This sequence belongs to the peptidase M16 family. Zn(2+) is required as a cofactor.

It localises to the plastid. The protein resides in the chloroplast stroma. Functionally, cleaves presequences (transit peptides) from chloroplastic protein precursors. Initially recognizes a precursor by binding to the C-terminus of its transit peptide and then removes the transit peptide in a single endoproteolytic step. In a next step, pursues the cleavage of transit peptide to a subfragment form. The sequence is that of Stromal processing peptidase, chloroplastic from Pisum sativum (Garden pea).